The chain runs to 313 residues: Porphobilinogen deaminase (313 aa).

C242 is modified (S-(dipyrrolylmethanemethyl)cysteine).

The protein belongs to the HMBS family. Monomer. Dipyrromethane serves as cofactor.

The enzyme catalyses 4 porphobilinogen + H2O = hydroxymethylbilane + 4 NH4(+). The protein operates within porphyrin-containing compound metabolism; protoporphyrin-IX biosynthesis; coproporphyrinogen-III from 5-aminolevulinate: step 2/4. Tetrapolymerization of the monopyrrole PBG into the hydroxymethylbilane pre-uroporphyrinogen in several discrete steps. The chain is Porphobilinogen deaminase from Salmonella arizonae (strain ATCC BAA-731 / CDC346-86 / RSK2980).